A 360-amino-acid chain; its full sequence is Phenylalanine--tRNA ligase alpha subunit (360 aa).

E260 is a binding site for Mg(2+).

It belongs to the class-II aminoacyl-tRNA synthetase family. Phe-tRNA synthetase alpha subunit type 1 subfamily. In terms of assembly, tetramer of two alpha and two beta subunits. The cofactor is Mg(2+).

It localises to the cytoplasm. It catalyses the reaction tRNA(Phe) + L-phenylalanine + ATP = L-phenylalanyl-tRNA(Phe) + AMP + diphosphate + H(+). This chain is Phenylalanine--tRNA ligase alpha subunit, found in Methylocella silvestris (strain DSM 15510 / CIP 108128 / LMG 27833 / NCIMB 13906 / BL2).